The following is a 375-amino-acid chain: Phytanoyl-CoA hydroxylase-interacting protein-like (375 aa).

Phosphoserine is present on residues serine 11, serine 12, and serine 15. Asparagine 22 carries an N-linked (GlcNAc...) asparagine glycan. Serine 24 bears the Phosphoserine mark. N-linked (GlcNAc...) asparagine glycosylation occurs at asparagine 36. The Fibronectin type-III domain occupies 51–160 (VPHNIKINNI…EIIEFCTADY (110 aa)).

It belongs to the PHYHIP family.

May play a role in the development of the central system. The chain is Phytanoyl-CoA hydroxylase-interacting protein-like (Phyhipl) from Mus musculus (Mouse).